Here is a 340-residue protein sequence, read N- to C-terminus: Organic solute transporter subunit alpha (340 aa).

The Extracellular segment spans residues 1–48 (MEPGRTHIKLDPRYTAELLELLETNYSISPACFSHPPTAAQLLRALGP). Residue Asn25 is glycosylated (N-linked (GlcNAc...) asparagine). The chain crosses the membrane as a helical span at residues 49 to 69 (VDIALTIILTFLTTGSVAIFL). Topologically, residues 70 to 87 (EDAVYLYKNTLCPIKKRT) are cytoplasmic. The chain crosses the membrane as a helical span at residues 88–108 (LIWSSSAPTVVSVFCCFGLWI). The Extracellular portion of the chain corresponds to 109–114 (PRALTL). A helical membrane pass occupies residues 115-135 (VEMAITSFYAVCFYLLMMVMV). The Cytoplasmic portion of the chain corresponds to 136 to 181 (EGFGGKKAVLRTLKDTPMRVHTGPCCCCCPCCPPLILTRKKLQLLL). Residues 182–202 (LGPFQYAFFKITLSIVGLFLI) traverse the membrane as a helical segment. Topologically, residues 203 to 219 (PDGIYDPGEISEKSAAL) are extracellular. The helical transmembrane segment at 220-240 (WINNLLAVSTLLALWSLAILF) threads the bilayer. Residues 241–255 (RQAKMHLGEQNMGSK) are Cytoplasmic-facing. A helical transmembrane segment spans residues 256 to 276 (FALFQVLVILTALQPAIFSIL). The Extracellular portion of the chain corresponds to 277-297 (ANSGQIACSPPYSSKIRSQVM). Residues 298–317 (NCHMLILETFLMTVLTRMYY) traverse the membrane as a helical segment. Residues 318 to 340 (RRKDDKVGYEACSLPDLDSALKA) lie on the Cytoplasmic side of the membrane. At Ser330 the chain carries Phosphoserine.

This sequence belongs to the OST-alpha family. Interacts with SLC51B. The Ost-alpha/Ost-beta complex is a heterodimer composed of alpha (SLC51A) and beta (SLC51B) subunit. N-glycosylated. In terms of tissue distribution, present at high levels in ileum. In ileum, it is restricted to the apical domain on the mature villus enterocytes with little detectable expression in the goblet cells or crypt enterocytes (at protein level). Expressed in kidney but not in heart, brain, liver, spleen, embryo, lung, thymus, ovary nor testis.

The protein localises to the cell membrane. The protein resides in the endoplasmic reticulum membrane. The catalysed reaction is taurocholate(out) = taurocholate(in). It catalyses the reaction tauroursodeoxycholate(out) = tauroursodeoxycholate(in). The enzyme catalyses glycoursodeoxycholate(out) = glycoursodeoxycholate(in). It carries out the reaction glycocholate(out) = glycocholate(in). The catalysed reaction is taurochenodeoxycholate(out) = taurochenodeoxycholate(in). It catalyses the reaction glycochenodeoxycholate(out) = glycochenodeoxycholate(in). The enzyme catalyses taurodeoxycholate(out) = taurodeoxycholate(in). It carries out the reaction glycodeoxycholate(out) = glycodeoxycholate(in). The catalysed reaction is prostaglandin E2(out) = prostaglandin E2(in). It catalyses the reaction estrone 3-sulfate(out) = estrone 3-sulfate(in). The enzyme catalyses dehydroepiandrosterone 3-sulfate(out) = dehydroepiandrosterone 3-sulfate(in). Functionally, essential component of the Ost-alpha/Ost-beta complex, a heterodimer that acts as the intestinal basolateral transporter responsible for bile acid export from enterocytes into portal blood. Efficiently transports the major species of bile acids (taurocholate). Taurine conjugates are transported more efficiently across the basolateral membrane than glycine-conjugated bile acids. Can also transport steroids such as estrone 3-sulfate and dehydroepiandrosterone 3-sulfate, therefore playing a role in the enterohepatic circulation of sterols. Able to transport eicosanoids such as prostaglandin E2. The sequence is that of Organic solute transporter subunit alpha (Slc51a) from Mus musculus (Mouse).